An 803-amino-acid chain; its full sequence is Zinc finger and BTB domain-containing protein 17 (803 aa).

The 104-residue stretch at 1–104 (MDFPQHSQHV…VATFLQMQDI (104 aa)) folds into the BTB domain. The tract at residues 116-295 (EPATSPGGNA…GLRSGTYGDR (180 aa)) is disordered. A Phosphoserine modification is found at Ser120. Over residues 132–142 (GGDKRAKEEKV) the composition is skewed to basic and acidic residues. Low complexity-rich tracts occupy residues 171–180 (GQAQSAASGA) and 206–217 (AAAEAEAALSES). 2 stretches are compositionally biased toward acidic residues: residues 233–244 (EQKEQEEQEEEG) and 261–272 (EAPEENENEESA). Residues 269 to 308 (EESAGTDSGQELGSEARGLRSGTYGDRTESKAYGSVIHKC) form an interaction with MYC region. 13 C2H2-type zinc fingers span residues 306-328 (HKCE…IRIH), 334-356 (FSCR…EKTH), 362-384 (YGCE…KKRH), 390-412 (YRCE…QLVH), 418-440 (YQCD…LETH), 446-468 (HKCP…LKIH), 474-496 (LKCR…LRIH), 502-524 (YVCI…VRIH), 530-552 (CQCV…VRQH), 558-580 (YVCE…IRHH), 586-608 (HKCS…IIIH), 614-637 (YLCD…KTVH), and 717-739 (YACD…VRIH). Lys397 participates in a covalent cross-link: Glycyl lysine isopeptide (Lys-Gly) (interchain with G-Cter in ubiquitin). Lys481 participates in a covalent cross-link: Glycyl lysine isopeptide (Lys-Gly) (interchain with G-Cter in ubiquitin). Residues 637-718 (HQGKAGIKIL…EDPNTHILYA (82 aa)) form an interaction with MYC region. The segment at 637–803 (HQGKAGIKIL…TAPECPPPAE (167 aa)) is interaction with HCFC1. The disordered stretch occupies residues 779–803 (RDGAEGQPALAETSPTAPECPPPAE).

Belongs to the krueppel C2H2-type zinc-finger protein family. Homooligomerizes (via the BTB/POZ domain), multimerization is required for DNA binding. Interacts (via the C-terminal zinc fingers) with GIF1; the interaction results in the recruitment of MYB to the CDKN1A/p21 and CDKN1B promoters and repression of transcription. Interacts with TRAF2, interfering with the binding of UBC13 to TRAF2, and inhibiting TRAF2 E3 ligase activity. Interacts with MYC (via the C-terminal helix-loop-helix motif); the interaction inhibits ZBTB17 transactivation and growth arrest activities and renders it insoluble in the nucleus. Also interacts with HCFC1, MAGEA4 and TMPRSS11A. Interacts with BCL6; the interaction inhibits ZBTB17 transactivation activity on target genes involved in cell cycle arrest. Interacts with ZBTB49 isoform 3/ZNF509S1; this interaction blocks ZBTB17-mediated repression of RB1. Undergoes 'Lys-48'-linked polyubiquitination at Lys-397 and Lys-481 and subsequent proteasomal degradation in a TRAF2-dependent manner. As to expression, expressed in germinal center B-cells.

It localises to the nucleus. Its function is as follows. Transcription factor that can function as an activator or repressor depending on its binding partners, and by targeting negative regulators of cell cycle progression. Plays a critical role in early lymphocyte development, where it is essential to prevent apoptosis in lymphoid precursors, allowing them to survive in response to IL7 and undergo proper lineage commitment. Has been shown to bind to the promoters of adenovirus major late protein and cyclin D1 and activate transcription. Required for early embryonic development during gastrulation. Represses RB1 transcription; this repression can be blocked by interaction with ZBTB49 isoform 3/ZNF509S1. This Homo sapiens (Human) protein is Zinc finger and BTB domain-containing protein 17 (ZBTB17).